Consider the following 89-residue polypeptide: Cell division topological specificity factor (89 aa).

It belongs to the MinE family.

Prevents the cell division inhibition by proteins MinC and MinD at internal division sites while permitting inhibition at polar sites. This ensures cell division at the proper site by restricting the formation of a division septum at the midpoint of the long axis of the cell. In Pectobacterium carotovorum subsp. carotovorum (strain PC1), this protein is Cell division topological specificity factor.